The sequence spans 117 residues: uncharacterized protein (117 aa).

The signal sequence occupies residues 1–20 (MAAVHLYIISFTALMISSTS).

This is an uncharacterized protein from Saccharomyces cerevisiae (strain ATCC 204508 / S288c) (Baker's yeast).